The primary structure comprises 122 residues: Large ribosomal subunit protein uL14 (122 aa).

The protein belongs to the universal ribosomal protein uL14 family. In terms of assembly, part of the 50S ribosomal subunit. Forms a cluster with proteins L3 and L19. In the 70S ribosome, L14 and L19 interact and together make contacts with the 16S rRNA in bridges B5 and B8.

Its function is as follows. Binds to 23S rRNA. Forms part of two intersubunit bridges in the 70S ribosome. This is Large ribosomal subunit protein uL14 from Synechococcus sp. (strain JA-2-3B'a(2-13)) (Cyanobacteria bacterium Yellowstone B-Prime).